We begin with the raw amino-acid sequence, 37 residues long: Photosystem II reaction center protein M (37 aa).

Residues 7–27 (AFIAVLLFLAVPTAFLLIPYV) traverse the membrane as a helical segment.

The protein belongs to the PsbM family. PSII is composed of 1 copy each of membrane proteins PsbA, PsbB, PsbC, PsbD, PsbE, PsbF, PsbH, PsbI, PsbJ, PsbK, PsbL, PsbM, PsbT, PsbX, PsbY, PsbZ, Psb30/Ycf12, at least 3 peripheral proteins of the oxygen-evolving complex and a large number of cofactors. It forms dimeric complexes.

It is found in the plastid. The protein localises to the chloroplast thylakoid membrane. One of the components of the core complex of photosystem II (PSII). PSII is a light-driven water:plastoquinone oxidoreductase that uses light energy to abstract electrons from H(2)O, generating O(2) and a proton gradient subsequently used for ATP formation. It consists of a core antenna complex that captures photons, and an electron transfer chain that converts photonic excitation into a charge separation. This subunit is found at the monomer-monomer interface. This Pinus thunbergii (Japanese black pine) protein is Photosystem II reaction center protein M.